Consider the following 329-residue polypeptide: L-lactate dehydrogenase (329 aa).

Residues valine 18, glutamate 39, lysine 46, tyrosine 71, and 85–86 contribute to the NAD(+) site; that span reads GA. Substrate is bound by residues glutamine 88 and arginine 94. NAD(+) contacts are provided by residues serine 107, 124–126, and serine 149; that span reads AAN. 126–129 contacts substrate; that stretch reads NPVD. 154–157 is a substrate binding site; sequence DSAR. Residues arginine 159 and histidine 174 each coordinate beta-D-fructose 1,6-bisphosphate. The active-site Proton acceptor is the histidine 181. Tyrosine 226 is subject to Phosphotyrosine. Position 235 (threonine 235) interacts with substrate.

Belongs to the LDH/MDH superfamily. LDH family. Homotetramer.

The protein localises to the cytoplasm. It catalyses the reaction (S)-lactate + NAD(+) = pyruvate + NADH + H(+). The protein operates within fermentation; pyruvate fermentation to lactate; (S)-lactate from pyruvate: step 1/1. With respect to regulation, allosterically activated by fructose 1,6-bisphosphate (FBP). In terms of biological role, catalyzes the conversion of lactate to pyruvate. The sequence is that of L-lactate dehydrogenase from Streptococcus equinus (Streptococcus bovis).